The chain runs to 860 residues: MEIGSAGPIGAQPLFIVPRRPGYGTMGKPIKLLANCFQVEIPKIDVYLYEVDIKPDKCPRRVNREVVDSMVQHFKVTIFGDRRPVYDGKRSLYTANPLPVATTGVDLDVTLPGEGGKDRPFKVSVKFVSRVSWHLLHEALAGGTLPEPLELDKPVSTNPVHAVDVVLRHLPSMKYTPVGRSFFSAPEGYDHPLGGGREVWFGFHQSVRPAMWKMMLNIDVSATAFYKAQPVIQFMCEVLDIHNIDEQPRPLTDSHRVKFTKEIKGLKVEVTHCGTMRRKYRVCNVTRRPASHQTFPLQLENGQTVERTVAQYFREKYTLQLKYPHLPCLQVGQEQKHTYLPLEVCNIVAGQRCIKKLTDNQTSTMIKATARSAPDRQEEISRLVRSANYETDPFVQEFQFKVRDEMAHVTGRVLPAPMLQYGGRNRTVATPSHGVWDMRGKQFHTGVEIKMWAIACFATQRQCREEILKGFTDQLRKISKDAGMPIQGQPCFCKYAQGADSVEPMFRHLKNTYSGLQLIIVILPGKTPVYAEVKRVGDTLLGMATQCVQVKNVIKTSPQTLSNLCLKINVKLGGINNILVPHQRPSVFQQPVIFLGADVTHPPAGDGKKPSIAAVVGSMDAHPSRYCATVRVQRPRQEIIQDLASMVRELLIQFYKSTRFKPTRIIFYRDGVSEGQFRQVLYYELLAIREACISLEKDYQPGITYIVVQKRHHTRLFCADRTERVGRSGNIPAGTTVDTDITHPYEFDFYLCSHAGIQGTSRPSHYHVLWDDNFFTADELQLLTYQLCHTYVRCTRSVSIPAPAYYAHLVAFRARYHLVDKEHDSAEGSHVSGQSNGRDPQALAKAVQIHQDTLRTMYFA.

M1 carries the N-acetylmethionine modification. One can recognise a PAZ domain in the interval 230-349 (PVIQFMCEVL…LPLEVCNIVA (120 aa)). The Piwi domain maps to 518 to 819 (LIIVILPGKT…VAFRARYHLV (302 aa)). The interval 530-567 (YAEVKRVGDTLLGMATQCVQVKNVIKTSPQTLSNLCLK) is interaction with guide RNA. Residues D598, E638, and D670 each contribute to the a divalent metal cation site. The interaction with guide RNA stretch occupies residues 758–805 (QGTSRPSHYHVLWDDNFFTADELQLLTYQLCHTYVRCTRSVSIPAPAY). An a divalent metal cation-binding site is contributed by H808. S825 carries the post-translational modification Phosphoserine.

This sequence belongs to the argonaute family. Ago subfamily. In terms of assembly, interacts with EIF4B, IMP8, PRMT5 and TNRC6B. Interacts with APOBEC3F, APOBEC3G and APOBEC3H. Interacts with EDC4. Post-translationally, ubiquitinated on surface-exposed lysines by a SCF-like E3 ubiquitin-protein ligase complex containing ZSWIM8 during target-directed microRNA degradation (TDMD), a process that mediates degradation of microRNAs (miRNAs). Ubiquitination by the SCF-like E3 ubiquitin-protein ligase complex containing ZSWIM8 leads to its subsequent degradation, thereby exposing miRNAs for degradation. ZSWIM8 recognizes and binds AGO3 when it is engaged with a TDMD target.

It is found in the cytoplasm. Its subcellular location is the P-body. It carries out the reaction Endonucleolytic cleavage to 5'-phosphomonoester.. Functionally, required for RNA-mediated gene silencing (RNAi). Binds to short RNAs such as microRNAs (miRNAs) and represses the translation of mRNAs which are complementary to them. Proposed to be involved in stabilization of small RNA derivates (siRNA) derived from processed RNA polymerase III-transcribed Alu repeats containing a DR2 retinoic acid response element (RARE) in stem cells and in the subsequent siRNA-dependent degradation of a subset of RNA polymerase II-transcribed coding mRNAs by recruiting a mRNA decapping complex involving EDC4. Possesses RNA slicer activity but only on select RNAs bearing 5'- and 3'-flanking sequences to the region of guide-target complementarity. In Mus musculus (Mouse), this protein is Protein argonaute-3 (Ago3).